Here is a 301-residue protein sequence, read N- to C-terminus: Dimethylsulfoniopropionate lyase (301 aa).

Active-site proton donor/acceptor residues include cysteine 111 and cysteine 230.

Belongs to the aspartate/glutamate racemases family. ALMA1 subfamily. As to quaternary structure, homotetramer.

It catalyses the reaction S,S-dimethyl-beta-propiothetin = acrylate + dimethyl sulfide + H(+). In terms of biological role, mediates cleavage of dimethylsulfoniopropionate (DMSP) into dimethyl sulfide (DMS) and acrylate. DMS is the principal form by which sulfur is transported from oceans to the atmosphere and is a key component of the ocean sulfur cycle. The polypeptide is Dimethylsulfoniopropionate lyase (Durusdinium sp. clade D (Symbiodinium sp. clade D)).